Here is a 632-residue protein sequence, read N- to C-terminus: Phosphomethylpyrimidine synthase (632 aa).

Substrate is bound by residues N237, M266, Y295, H331, 351–353 (SRG), 392–395 (DGLR), and E431. A Zn(2+)-binding site is contributed by H435. Y458 contacts substrate. H499 contributes to the Zn(2+) binding site. The [4Fe-4S] cluster site is built by C579, C582, and C587.

This sequence belongs to the ThiC family. Homodimer. The cofactor is [4Fe-4S] cluster.

The enzyme catalyses 5-amino-1-(5-phospho-beta-D-ribosyl)imidazole + S-adenosyl-L-methionine = 4-amino-2-methyl-5-(phosphooxymethyl)pyrimidine + CO + 5'-deoxyadenosine + formate + L-methionine + 3 H(+). Its pathway is cofactor biosynthesis; thiamine diphosphate biosynthesis. Catalyzes the synthesis of the hydroxymethylpyrimidine phosphate (HMP-P) moiety of thiamine from aminoimidazole ribotide (AIR) in a radical S-adenosyl-L-methionine (SAM)-dependent reaction. This chain is Phosphomethylpyrimidine synthase, found in Nitrosomonas eutropha (strain DSM 101675 / C91 / Nm57).